We begin with the raw amino-acid sequence, 473 residues long: Lactate utilization protein B (473 aa).

2 consecutive 4Fe-4S ferredoxin-type domains span residues 303-333 (GTAF…GHSY) and 352-381 (YDDY…LHEL). Residues Cys312, Cys315, Cys318, Cys322, Cys365, Cys368, and Cys372 each coordinate [4Fe-4S] cluster.

Belongs to the LutB/YkgF family.

Functionally, is involved in L-lactate degradation and allows cells to grow with lactate as the sole carbon source. Has probably a role as an electron transporter during oxidation of L-lactate. This chain is Lactate utilization protein B, found in Bacillus pumilus (strain SAFR-032).